Here is a 192-residue protein sequence, read N- to C-terminus: dTTP/UTP pyrophosphatase (192 aa).

Residue aspartate 71 is the Proton acceptor of the active site.

This sequence belongs to the Maf family. YhdE subfamily. It depends on a divalent metal cation as a cofactor.

The protein resides in the cytoplasm. It carries out the reaction dTTP + H2O = dTMP + diphosphate + H(+). It catalyses the reaction UTP + H2O = UMP + diphosphate + H(+). In terms of biological role, nucleoside triphosphate pyrophosphatase that hydrolyzes dTTP and UTP. May have a dual role in cell division arrest and in preventing the incorporation of modified nucleotides into cellular nucleic acids. The sequence is that of dTTP/UTP pyrophosphatase from Clostridium kluyveri (strain NBRC 12016).